The chain runs to 665 residues: Transketolase (665 aa).

Substrate is bound at residue H26. Residues H66 and 114–116 (GPL) each bind thiamine diphosphate. D155 is a Mg(2+) binding site. G156 and N185 together coordinate thiamine diphosphate. Mg(2+) contacts are provided by N185 and I187. Substrate-binding residues include H261, R358, and S385. Position 261 (H261) interacts with thiamine diphosphate. E411 functions as the Proton donor in the catalytic mechanism. Position 437 (F437) interacts with thiamine diphosphate. Substrate is bound by residues H461, D469, and R520.

The protein belongs to the transketolase family. Homodimer. Requires Mg(2+) as cofactor. It depends on Ca(2+) as a cofactor. Mn(2+) is required as a cofactor. Co(2+) serves as cofactor. The cofactor is thiamine diphosphate.

The catalysed reaction is D-sedoheptulose 7-phosphate + D-glyceraldehyde 3-phosphate = aldehydo-D-ribose 5-phosphate + D-xylulose 5-phosphate. Functionally, catalyzes the transfer of a two-carbon ketol group from a ketose donor to an aldose acceptor, via a covalent intermediate with the cofactor thiamine pyrophosphate. The chain is Transketolase (tkt) from Buchnera aphidicola subsp. Schizaphis graminum (strain Sg).